A 332-amino-acid polypeptide reads, in one-letter code: Ribonucleoside-diphosphate reductase small chain C (332 aa).

Fe cation contacts are provided by D76, E107, and H110. Residue Y114 is part of the active site. Fe cation is bound by residues E169, E203, and H206.

It belongs to the ribonucleoside diphosphate reductase small chain family. As to quaternary structure, homodimer and heterodimer with RNR2A. Heterotetramer of two R1 and two R2 chains. Interacts with CSN7 (via C-terminal tail). Fe cation serves as cofactor. In terms of tissue distribution, expressed in roots, cauline and rosette leaves, stems and flowers.

The protein resides in the cytoplasm. It is found in the nucleus. The catalysed reaction is a 2'-deoxyribonucleoside 5'-diphosphate + [thioredoxin]-disulfide + H2O = a ribonucleoside 5'-diphosphate + [thioredoxin]-dithiol. Its function is as follows. Provides the precursors necessary for DNA synthesis. Catalyzes the biosynthesis of deoxyribonucleotides from the corresponding ribonucleotides. Involved in DNA damage repair and programmed cell death inhibition. The protein is Ribonucleoside-diphosphate reductase small chain C (TSO2) of Arabidopsis thaliana (Mouse-ear cress).